Reading from the N-terminus, the 75-residue chain is High-potential iron-sulfur protein (75 aa).

C38, C41, C54, and C68 together coordinate [4Fe-4S] cluster.

In terms of assembly, homodimer. Monomer at different ionic strengths.

Functionally, specific class of high-redox-potential 4Fe-4S ferredoxins. Functions in anaerobic electron transport in most purple and in some other photosynthetic bacteria and in at least one genus (Paracoccus) of halophilic, denitrifying bacteria. Competent in photosynthetic electron transfer to oxidized cytochrome bc1 complex via the membrane-bound c-type tetraheme. This Rhodoferax fermentans protein is High-potential iron-sulfur protein (hip).